A 79-amino-acid chain; its full sequence is CATR tumorigenic conversion 1 protein (79 aa).

This Homo sapiens (Human) protein is CATR tumorigenic conversion 1 protein (CATR1).